Consider the following 877-residue polypeptide: MVTSLIVRLVAWSVRRPVWVVVLSLLIAAFSGVYVARHFKINTDISKLVDAEPQWAALSQAVDRAFPQRNGTILAVVEAPAPEFATAAAHALTESLQKQAAAGRIGPVAEPGGGPFFEHNGLLFLSPQQVADTTSQLASARPLVNELAKNPSLTGLATTLSTTLGQPLLTGQVKLPSMAKLLSRSAATVDDVLAGKPAAFSWRALVDNDAARQPARAFVTVQPVVNYGALKAGAQTSDVIRETARALDLEKRYGAVVRLTGEQPLADDEFSSVEDGAALNGVVTLLVVFVILWLALRSKRMIASVLVTLFVGLVVTAALGLAMVGSLNMISVAFMVLFVGLGVDFSIQYGVKYREERFRDERIDHALIGAAHSMGMPLALATTAVAASFFSFIPTAYRGVSELGLIAGVGMFVALLTTLTLLPALLRLFAPPGESKTPGFPWLAPVDDYLDRHRKPILIGTLAVVIGALPLLAFLHFDFNPLHLKDPHSESMSTLLALKDSPEAAVNDVTLLAPSLADADAAAKRLDALPEVGRTTTLSTFIPADQPEKRAAIATAASTLLPALTQPPAPPATDAQRVAALKRASDLLGYAAEDHPGPGAAAAQHLSQSLAKLAAADSATRDRAERAFADTLRIALNQLAALLQPQEITRDTLPPPLVRDWVAPDGKALVQISPKVPKGVDPNDDTMLRHFATAVKAAEPGAIGGPISILHSANTIISAFLHAALWSIISITILLWITLRRFGDVLRTLVPLLVSGIVTLEMCVVLGMSLNFANIIALPLMLGVGVAFKVYFVMAWRAGQTGLLHSSLTHAVLFSAATTATAFGSLWLSHHPGTSSMGKLLALALTCTLIGAVVFQPVLMGKPRVKRAKNQSQGINE.

The Cytoplasmic segment spans residues 1 to 16; it reads MVTSLIVRLVAWSVRR. A helical membrane pass occupies residues 17 to 37; it reads PVWVVVLSLLIAAFSGVYVAR. Over 38–279 the chain is Periplasmic; sequence HFKINTDISK…FSSVEDGAAL (242 aa). A helical membrane pass occupies residues 280 to 295; sequence NGVVTLLVVFVILWLA. At 296-299 the chain is on the cytoplasmic side; that stretch reads LRSK. Residues 300 to 323 form a helical membrane-spanning segment; sequence RMIASVLVTLFVGLVVTAALGLAM. The SSD domain maps to 302–428; sequence IASVLVTLFV…LTLLPALLRL (127 aa). Residues 324 to 332 lie on the Periplasmic side of the membrane; the sequence is VGSLNMISV. The chain crosses the membrane as a helical span at residues 333 to 351; that stretch reads AFMVLFVGLGVDFSIQYGV. Over 352 to 373 the chain is Cytoplasmic; the sequence is KYREERFRDERIDHALIGAAHS. A helical transmembrane segment spans residues 374 to 394; the sequence is MGMPLALATTAVAASFFSFIP. Over 395–399 the chain is Periplasmic; the sequence is TAYRG. The chain crosses the membrane as a helical span at residues 400-426; it reads VSELGLIAGVGMFVALLTTLTLLPALL. The Cytoplasmic segment spans residues 427-452; that stretch reads RLFAPPGESKTPGFPWLAPVDDYLDR. A helical membrane pass occupies residues 453 to 472; sequence HRKPILIGTLAVVIGALPLL. The Periplasmic segment spans residues 473 to 718; that stretch reads AFLHFDFNPL…ILHSANTIIS (246 aa). The chain crosses the membrane as a helical span at residues 719 to 739; that stretch reads AFLHAALWSIISITILLWITL. The Cytoplasmic portion of the chain corresponds to 740–743; that stretch reads RRFG. Residues 744–766 form a helical membrane-spanning segment; the sequence is DVLRTLVPLLVSGIVTLEMCVVL. The Periplasmic segment spans residues 767-774; the sequence is GMSLNFAN. The helical transmembrane segment at 775–794 threads the bilayer; the sequence is IIALPLMLGVGVAFKVYFVM. Over 795-809 the chain is Cytoplasmic; sequence AWRAGQTGLLHSSLT. Residues 810-827 traverse the membrane as a helical segment; sequence HAVLFSAATTATAFGSLW. Residues 828-836 are Periplasmic-facing; sequence LSHHPGTSS. A helical transmembrane segment spans residues 837–858; it reads MGKLLALALTCTLIGAVVFQPV. The Cytoplasmic segment spans residues 859–877; the sequence is LMGKPRVKRAKNQSQGINE.

This sequence belongs to the resistance-nodulation-cell division (RND) (TC 2.A.6) family. MmpL subfamily. Homodimer.

Its subcellular location is the cell inner membrane. In terms of biological role, essential for hopanoid transport from the cytoplasmic to the outer membrane. Is capable of shuttling hopanoid lipids from the inner membrane to the periplasm, where they probably spontaneously insert to the inner leaflet of the outer membrane, strengthening the cell envelope. May be a proton-motive-force (PMF)-dependent transporter. Is critical for multidrug resistance and cell wall remodeling in Burkholderia. The sequence is that of Hopanoid transporter HpnN from Burkholderia multivorans (strain ATCC 17616 / 249).